Here is a 482-residue protein sequence, read N- to C-terminus: MTTALQEQNTQSSATAGRVVRVIGPVVDVEFPRGGLPALYNALTVEVTLEAVAKTVTLEVAQHLGDNLVRAVSMAPTDGLVRGAAVTDTGKPISVPVGDVVKGHVFNALGDCLDQPGLGRDGEQWGIHREPPAFDQLEGKTEILETGIKVIDLLTPYVKGGKIGLFGGAGVGKTVLIQEMITRIAREFSGTSVFAGVGERTREGTDLFLEMEEMGVLQDTALVFGQMDEPPGVRMRVALSGLTMAEYFRDVQNQDVLLFIDNIFRFTQAGSEVSTLLGRMPSAVGYQPTLADEMGVLQERITSTKGKSITSLQAVYVPADDYTDPAPATTFAHLDATTELDRGIASKGIYPAVNPLTSTSRILEPSIVGERHYEVAQRVIGILQKNKELQDIIAILGMDELSEEDKITVQRARRIERFLGQNFFVAEKFTGLPGSYVPLADTIDAFERICNGEFDHYPEQAFNGLGGLDDVEAAYKKLTEKK.

Residue 167-174 participates in ATP binding; that stretch reads GGAGVGKT.

The protein belongs to the ATPase alpha/beta chains family. F-type ATPases have 2 components, CF(1) - the catalytic core - and CF(0) - the membrane proton channel. CF(1) has five subunits: alpha(3), beta(3), gamma(1), delta(1), epsilon(1). CF(0) has three main subunits: a(1), b(2) and c(9-12). The alpha and beta chains form an alternating ring which encloses part of the gamma chain. CF(1) is attached to CF(0) by a central stalk formed by the gamma and epsilon chains, while a peripheral stalk is formed by the delta and b chains.

Its subcellular location is the cell membrane. The catalysed reaction is ATP + H2O + 4 H(+)(in) = ADP + phosphate + 5 H(+)(out). Functionally, produces ATP from ADP in the presence of a proton gradient across the membrane. The catalytic sites are hosted primarily by the beta subunits. The protein is ATP synthase subunit beta of Corynebacterium aurimucosum (strain ATCC 700975 / DSM 44827 / CIP 107346 / CN-1) (Corynebacterium nigricans).